The sequence spans 489 residues: Protein MGF 505-2R (489 aa).

It belongs to the asfivirus MGF 505 family.

In terms of biological role, plays a role in virus cell tropism, and may be required for efficient virus replication in macrophages. The chain is Protein MGF 505-2R from Ornithodoros (relapsing fever ticks).